The chain runs to 957 residues: Protein translocase subunit SecA (957 aa).

Residues Gln-86, 104–108 (GEGKT), and Asp-494 each bind ATP. The span at 929-947 (SRPAPAPTAAASPDPSSAS) shows a compositional bias: low complexity. Residues 929 to 957 (SRPAPAPTAAASPDPSSASGVVEADFTEE) are disordered.

Belongs to the SecA family. As to quaternary structure, monomer and homodimer. Part of the essential Sec protein translocation apparatus which comprises SecA, SecYEG and auxiliary proteins SecDF. Other proteins may also be involved.

The protein resides in the cell inner membrane. Its subcellular location is the cellular thylakoid membrane. The protein localises to the cytoplasm. It carries out the reaction ATP + H2O + cellular proteinSide 1 = ADP + phosphate + cellular proteinSide 2.. Functionally, part of the Sec protein translocase complex. Interacts with the SecYEG preprotein conducting channel. Has a central role in coupling the hydrolysis of ATP to the transfer of proteins into and across the cell membrane, serving as an ATP-driven molecular motor driving the stepwise translocation of polypeptide chains across the membrane. Its function is as follows. Probably participates in protein translocation into and across both the cytoplasmic and thylakoid membranes in cyanobacterial cells. The chain is Protein translocase subunit SecA from Synechococcus sp. (strain JA-2-3B'a(2-13)) (Cyanobacteria bacterium Yellowstone B-Prime).